Here is a 347-residue protein sequence, read N- to C-terminus: D-alanine--D-alanine ligase (347 aa).

The 203-residue stretch at 131-333 folds into the ATP-grasp domain; that stretch reads KRVLESAGIA…YPDLIERLVE (203 aa). 161 to 216 lines the ATP pocket; it reads EEELTYPVFTKPSNMGSSVGISKSENQEELRQALKLAFQYDSRVLVEQGVNAREIE. Mg(2+)-binding residues include Asp-287, Glu-300, and Asn-302.

Belongs to the D-alanine--D-alanine ligase family. Requires Mg(2+) as cofactor. Mn(2+) serves as cofactor.

The protein localises to the cytoplasm. The catalysed reaction is 2 D-alanine + ATP = D-alanyl-D-alanine + ADP + phosphate + H(+). The protein operates within cell wall biogenesis; peptidoglycan biosynthesis. Its function is as follows. Cell wall formation. This Streptococcus pneumoniae (strain Hungary19A-6) protein is D-alanine--D-alanine ligase.